Here is a 492-residue protein sequence, read N- to C-terminus: Solute carrier family 2, facilitated glucose transporter member 1 (492 aa).

At M1 the chain carries N-acetylmethionine. The Cytoplasmic segment spans residues 1–11; the sequence is MEPSSKKLTGR. Residues 12 to 33 form a helical membrane-spanning segment; it reads LMLAVGGAVLGSLQFGYNTGVI. At 34-66 the chain is on the extracellular side; sequence NAPQKVIEEFYNQTWVHRYGESILPTTLTTLWS. N-linked (GlcNAc...) asparagine glycosylation is present at N45. The chain crosses the membrane as a helical span at residues 67–87; sequence LSVAIFSVGGMIGSFSVGLFV. Topologically, residues 88–90 are cytoplasmic; the sequence is NRF. Residues 91–112 form a helical membrane-spanning segment; that stretch reads GRRNSMLMMNLLAFVSAVLMGF. Residues 113–120 are Extracellular-facing; that stretch reads SKLGKSFE. The helical transmembrane segment at 121-144 threads the bilayer; it reads MLILGRFIIGVYCGLTTGFVPMYV. T137 lines the cytochalasin B pocket. Residues 145–155 lie on the Cytoplasmic side of the membrane; that stretch reads GEVSPTALRGA. Residues 156–176 form a helical membrane-spanning segment; that stretch reads LGTLHQLGIVVGILIAQVFGL. At 177 to 185 the chain is on the extracellular side; it reads DSIMGNKDL. Residues 186 to 206 traverse the membrane as a helical segment; it reads WPLLLSIIFIPALLQCIVLPF. The Cytoplasmic portion of the chain corresponds to 207 to 271; it reads CPESPRFLLI…LFRSPAYRQP (65 aa). Phosphoserine; by PKC/PRKCB is present on S226. A helical transmembrane segment spans residues 272–293; that stretch reads ILIAVVLQLSQQLSGINAVFYY. Q282 is a cytochalasin B binding site. Residues 282–283 and N288 each bind D-glucose; that span reads QQ. At 294–306 the chain is on the extracellular side; the sequence is STSIFEKAGVQQP. The helical transmembrane segment at 307-328 threads the bilayer; the sequence is VYATIGSGIVNTAFTVVSLFVV. Residue N317 coordinates D-glucose. At 329-334 the chain is on the cytoplasmic side; sequence ERAGRR. A helical transmembrane segment spans residues 335 to 355; the sequence is TLHLIGLAGMAGCAILMTIAL. Topologically, residues 356 to 365 are extracellular; it reads ALLEQLPWMS. A helical transmembrane segment spans residues 366–388; that stretch reads YLSIVAIFGFVAFFEVGPGPIPW. E380 is a binding site for D-glucose. A cytochalasin B-binding site is contributed by W388. Residues 389 to 401 are Cytoplasmic-facing; the sequence is FIVAELFSQGPRP. A helical transmembrane segment spans residues 402–422; it reads AAIAVAGFSNWTSNFIVGMCF. Residue N411 coordinates cytochalasin B. The Extracellular portion of the chain corresponds to 423 to 429; the sequence is QYVEQLC. Residues 430–450 form a helical membrane-spanning segment; that stretch reads GPYVFIIFTVLLVLFFIFTYF. Residues 451 to 492 lie on the Cytoplasmic side of the membrane; that stretch reads KVPETKGRTFDEIASGFRQGGASQSDKTPEELFHPLGADSQV. Phosphoserine is present on S465. The disordered stretch occupies residues 468-492; that stretch reads RQGGASQSDKTPEELFHPLGADSQV. T478 carries the phosphothreonine modification. A Phosphoserine modification is found at S490.

The protein belongs to the major facilitator superfamily. Sugar transporter (TC 2.A.1.1) family. Glucose transporter subfamily. Interacts with GIPC (via PDZ domain). Found in a complex with ADD2, DMTN and SLC2A1. Interacts (via C-terminus cytoplasmic region) with DMTN isoform 2. Interacts with SNX27; the interaction is required when endocytosed to prevent degradation in lysosomes and promote recycling to the plasma membrane. Interacts with STOM. Interacts with SGTA (via Gln-rich region). Interacts with isoform 1 of BSG. In terms of processing, phosphorylation at Ser-226 by PKC promotes glucose uptake by increasing cell membrane localization. Detected in erythrocytes (at protein level). Expressed at variable levels in many human tissues.

It localises to the cell membrane. It is found in the melanosome. The protein localises to the photoreceptor inner segment. It carries out the reaction D-glucose(out) = D-glucose(in). It participates in carbohydrate degradation. The uptake of glucose is inhibited by cytochalasin B and Phe-amide core-scaffold inhibitors GLUT-i1 and GLUT-i2. These inhibitors bind in the central cavity of the inward-open state and overlap the glucose-binding site. Glucose uptake is increased in response to phorbol ester 12-O-tetradecanoylphorbol-13-acetate (TPA) treatment: TPA-induced glucose uptake requires phosphorylation at Ser-226. Interacts with SMIM43; the interaction may promote SLC2A1-mediated glucose transport to meet the energy needs of mesendoderm differentiation. In terms of biological role, facilitative glucose transporter, which is responsible for constitutive or basal glucose uptake. Has a very broad substrate specificity; can transport a wide range of aldoses including both pentoses and hexoses. Most important energy carrier of the brain: present at the blood-brain barrier and assures the energy-independent, facilitative transport of glucose into the brain. In association with BSG and NXNL1, promotes retinal cone survival by increasing glucose uptake into photoreceptors. Required for mesendoderm differentiation. This chain is Solute carrier family 2, facilitated glucose transporter member 1, found in Homo sapiens (Human).